Reading from the N-terminus, the 160-residue chain is Ribosomal RNA large subunit methyltransferase H (160 aa).

Residues L76, G108, and L127 to W132 contribute to the S-adenosyl-L-methionine site.

It belongs to the RNA methyltransferase RlmH family. As to quaternary structure, homodimer.

The protein localises to the cytoplasm. The enzyme catalyses pseudouridine(1915) in 23S rRNA + S-adenosyl-L-methionine = N(3)-methylpseudouridine(1915) in 23S rRNA + S-adenosyl-L-homocysteine + H(+). Specifically methylates the pseudouridine at position 1915 (m3Psi1915) in 23S rRNA. The sequence is that of Ribosomal RNA large subunit methyltransferase H from Rhizobium meliloti (strain 1021) (Ensifer meliloti).